The sequence spans 228 residues: UPF0173 metal-dependent hydrolase LMOf2365_1599 (228 aa).

This sequence belongs to the UPF0173 family.

The polypeptide is UPF0173 metal-dependent hydrolase LMOf2365_1599 (Listeria monocytogenes serotype 4b (strain F2365)).